Reading from the N-terminus, the 1186-residue chain is Atrophin-1 (1186 aa).

Disordered stretches follow at residues Met1–Thr604, Ala618–Asn763, and Val781–Pro858. The short motif at Arg16–Arg32 is the Nuclear localization signal element. A compositionally biased stretch (basic and acidic residues) spans Lys17–Ser29. The residue at position 34 (Ser34) is a Phosphoserine. A compositionally biased stretch (basic and acidic residues) spans Gly45–Ser63. A phosphoserine mark is found at Ser77, Ser79, Ser100, Ser102, and Ser106. The segment covering Leu107 to Asn127 has biased composition (basic and acidic residues). Over residues Arg128–Ser151 the composition is skewed to polar residues. Residues Pro157 to Ser173 are compositionally biased toward pro residues. Composition is skewed to low complexity over residues Pro258–Pro270, Pro349–Ala365, and Ser375–Ser396. The segment covering Ser416–Trp437 has biased composition (polar residues). The span at Gln484–Ser503 shows a compositional bias: low complexity. The interval His513–Pro563 is involved in binding BAIAP2. The span at Pro537–His549 shows a compositional bias: pro residues. Composition is skewed to low complexity over residues Ser565–Ser582 and Ala618–Ser628. Residue Ser628 is modified to Phosphoserine. Position 637 is an N6-acetyllysine (Lys637). Thr649 carries the phosphothreonine modification. Residue Ser657 is modified to Phosphoserine. Thr665 is subject to Phosphothreonine. Composition is skewed to pro residues over residues Gly689–Gly714 and Ser735–Lys748. At Ser735 the chain carries Phosphoserine; by MAPK8. Phosphoserine is present on residues Ser742 and Ser744. A compositionally biased stretch (basic and acidic residues) spans Lys791–Val835. The tract at residues Asp875–Val890 is required for interaction with FAT1. Position 892 is a phosphoserine (Ser892). The Nuclear export signal motif lies at Ala1029–Arg1037. Arg1111 carries the asymmetric dimethylarginine modification. Residue Lys1179 forms a Glycyl lysine isopeptide (Lys-Gly) (interchain with G-Cter in SUMO2) linkage.

In terms of assembly, interacts with NR2E1; the interaction represses the transcriptional activity of NR2E1. Interacts with BAIAP2, WWP1, WWP2, WWP3 and RERE. Interacts (via its N-terminus) with MTG8; the interaction enhances transcriptional repression of MTG8. Interacts with FAT1 (via a C-terminal domain). Interacts with PQBP1. In terms of processing, phosphorylated in vitro by MAPK8/JNK1 on Ser-735.

It localises to the nucleus. The protein resides in the cytoplasm. Its subcellular location is the perinuclear region. The protein localises to the cell junction. Transcriptional corepressor. Corepressor of MTG8 transcriptional repression. Recruits NR2E1 to repress transcription. Has some intrinsic repression activity. Promotes vascular smooth cell (VSMC) migration and orientation. In Pan troglodytes (Chimpanzee), this protein is Atrophin-1 (ATN1).